We begin with the raw amino-acid sequence, 81 residues long: Acylphosphatase (81 aa).

The region spanning 1–81 is the Acylphosphatase-like domain; the sequence is MYIFHGRVQG…VKYNDFQIRY (81 aa). Residues Arg-14 and Asn-32 contribute to the active site.

Belongs to the acylphosphatase family.

It carries out the reaction an acyl phosphate + H2O = a carboxylate + phosphate + H(+). The polypeptide is Acylphosphatase (acyP) (Picrophilus torridus (strain ATCC 700027 / DSM 9790 / JCM 10055 / NBRC 100828 / KAW 2/3)).